A 107-amino-acid chain; its full sequence is Frataxin (107 aa).

The protein belongs to the frataxin family. Monomer.

The protein localises to the cytoplasm. Its function is as follows. Promotes the assembly and repair of iron-sulfur clusters by delivering Fe(2+) to proteins involved in these pathways. This chain is Frataxin (YFH1), found in Trachipleistophora hominis (Microsporidian parasite).